The primary structure comprises 230 residues: MIIKKNIKRAEFIKRPNRFQAYVKVDNEEIMVHVPNTGRCKEILIPGTTVVLREESNPTRKTKYDLIGGYKNGKFINIDSQIPNKVVEEALKLGNIKKLKKYNIIKREKTYGNSRFDFKLGNDSGEEYYLEVKGVTLEDGGVTKFPDAPTERGTKHILELIDVKNKGIGAGVLFLIQMKDVKYFTPNIEMDKNFSEALVSAHKAGVDIFAYECDVDEDFITLKKEVKVIL.

It belongs to the SfsA family.

This Clostridium tetani (strain Massachusetts / E88) protein is Sugar fermentation stimulation protein homolog.